We begin with the raw amino-acid sequence, 249 residues long: Phosphoribosylaminoimidazole-succinocarboxamide synthase (249 aa).

Belongs to the SAICAR synthetase family.

It carries out the reaction 5-amino-1-(5-phospho-D-ribosyl)imidazole-4-carboxylate + L-aspartate + ATP = (2S)-2-[5-amino-1-(5-phospho-beta-D-ribosyl)imidazole-4-carboxamido]succinate + ADP + phosphate + 2 H(+). It participates in purine metabolism; IMP biosynthesis via de novo pathway; 5-amino-1-(5-phospho-D-ribosyl)imidazole-4-carboxamide from 5-amino-1-(5-phospho-D-ribosyl)imidazole-4-carboxylate: step 1/2. This is Phosphoribosylaminoimidazole-succinocarboxamide synthase from Roseiflexus castenholzii (strain DSM 13941 / HLO8).